Here is an 88-residue protein sequence, read N- to C-terminus: Small ribosomal subunit protein uS15c (88 aa).

The protein belongs to the universal ribosomal protein uS15 family. Part of the 30S ribosomal subunit.

Its subcellular location is the plastid. It localises to the chloroplast. This chain is Small ribosomal subunit protein uS15c (rps15), found in Barbarea verna (Land cress).